The sequence spans 115 residues: T cell receptor delta variable 1 (115 aa).

Positions 1 to 21 (MLFSSLLCVFVAFSYSGSSVA) are cleaved as a signal peptide. The region spanning 22–115 (QKVTQAQSSV…SAKYFCALGE (94 aa)) is the Ig-like domain. A disulfide bridge links Cys-43 with Cys-111.

As to quaternary structure, gamma-delta TR is a heterodimer composed of a gamma and delta chain; disulfide-linked. The gamma-delta TR is associated with the transmembrane signaling CD3 coreceptor proteins following the stoichiometry: a single gamma-delta TR heterodimer associates with one CD3D-CD3E heterodimer, one CD3G-CD3E heterodimer and one CD247 homodimer forming a stable octameric structure. Upon activation, gamma-delta TR complex associates with FCER1G to initiate intracellular signaling.

It localises to the cell membrane. V region of the variable domain of T cell receptor (TR) delta chain that participates in the antigen recognition. Gamma-delta TRs recognize a variety of self and foreign non-peptide antigens frequently expressed at the epithelial boundaries between the host and external environment, including endogenous lipids presented by MH-like protein CD1D and phosphoantigens presented by butyrophilin-like molecule BTN3A1. Upon antigen recognition induces rapid, innate-like immune responses involved in pathogen clearance and tissue repair. Binding of gamma-delta TR complex to antigen triggers phosphorylation of immunoreceptor tyrosine-based activation motifs (ITAMs) in the CD3 chains by the LCK and FYN kinases, allowing the recruitment, phosphorylation, and activation of ZAP70 that facilitates phosphorylation of the scaffolding proteins LCP2 and LAT. This lead to the formation of a supramolecular signalosome that recruits the phospholipase PLCG1, resulting in calcium mobilization and ERK activation, ultimately leading to T cell expansion and differentiation into effector cells. Gamma-delta TRs are produced through somatic rearrangement of a limited repertoire of variable (V), diversity (D), and joining (J) genes. The potential diversity of gamma-delta TRs is conferred by the unique ability to rearrange (D) genes in tandem and to utilize all three reading frames. The combinatorial diversity is considerably increased by the sequence exonuclease trimming and random nucleotide (N) region additions which occur during the V-(D)-J rearrangements. The sequence is that of T cell receptor delta variable 1 from Homo sapiens (Human).